Reading from the N-terminus, the 434-residue chain is ATP-dependent protease ATPase subunit HslU (434 aa).

Residues V18, 60–65 (GVGKTE), D247, E312, and R384 each bind ATP.

The protein belongs to the ClpX chaperone family. HslU subfamily. In terms of assembly, a double ring-shaped homohexamer of HslV is capped on each side by a ring-shaped HslU homohexamer. The assembly of the HslU/HslV complex is dependent on binding of ATP.

It localises to the cytoplasm. In terms of biological role, ATPase subunit of a proteasome-like degradation complex; this subunit has chaperone activity. The binding of ATP and its subsequent hydrolysis by HslU are essential for unfolding of protein substrates subsequently hydrolyzed by HslV. HslU recognizes the N-terminal part of its protein substrates and unfolds these before they are guided to HslV for hydrolysis. The chain is ATP-dependent protease ATPase subunit HslU from Hyphomonas neptunium (strain ATCC 15444).